We begin with the raw amino-acid sequence, 401 residues long: MLTSFHSIKSRYTAPVRLRFFGELLTSLTGAMMGPFMVLYLHEQLNGSIMMPMLIISLQPFADIFLTLAAGRVTDRLGRRTAILTALLLQSAAMTGFVFAEHAYVFAILYVMNGIGRSLYIPASRAQIAESTPESRRSEVFAVINAIYSTGLTAGPLVGMLLYNHNPVWIFALDAAALFIYFLIAALKLPETKPLHPAVTPKMSASFTIYRPVLLLLLLSLPISMLYAQTETTYRLFSKNMFSDYLSMLTIYSAAKALFSCVLQVPLVKGTEKLSMKTILFITYICYSLAAAGFACSTSLTMLLVTAAVMTVGESIGLTHIQTFISKLAPPHLLGRFYAVYGLHWDISRSIGPLAGGLILTSFGGEVIFYALAVCLLTAGLSLTYTIEKLEHKVIRKVNRL.

Helical transmembrane passes span 20–40 (FFGE…MVLY), 49–69 (IMMP…LTLA), 83–100 (ILTA…FVFA), 104–121 (YVFA…SLYI), 140–160 (VFAV…LVGM), 167–187 (PVWI…IAAL), 207–227 (FTIY…SMLY), 248–268 (MLTI…VPLV), 289–309 (LAAA…TAAV), and 357–377 (GLIL…VCLL).

Belongs to the major facilitator superfamily.

Its subcellular location is the cell membrane. This is an uncharacterized protein from Bacillus subtilis (strain 168).